A 399-amino-acid chain; its full sequence is uncharacterized protein (399 aa).

The next 9 helical transmembrane spans lie at 46 to 66, 76 to 95, 139 to 159, 181 to 201, 226 to 246, 262 to 282, 303 to 323, 330 to 350, and 352 to 372; these read IAPY…FFIV, TLPR…YQTM, GVGY…FWMA, IIII…FWTF, LMLN…TCFF, ILPA…SFIW, VQFS…LAHM, IIQA…INYF, and GTII…SFVH.

This sequence belongs to the CDP-alcohol phosphatidyltransferase class-I family.

The protein localises to the membrane. This is an uncharacterized protein from Dictyostelium discoideum (Social amoeba).